The sequence spans 540 residues: Beta-2-syntrophin (540 aa).

A disordered region spans residues 73–114 (LPNGGGAGDSLPGSPSRGLGPPSPPAPPRGPAGEAGASPPVR). Positions 81–92 (DSLPGSPSRGLG) are enriched in low complexity. The segment covering 93-102 (PPSPPAPPRG) has biased composition (pro residues). A phosphoserine mark is found at Ser-95, Ser-110, Ser-129, Ser-211, Ser-222, Ser-233, Ser-393, and Ser-395. Residues 103–112 (PAGEAGASPP) show a composition bias toward low complexity. The 84-residue stretch at 115–198 (RVRVVKQEAG…EVLLEVKFIR (84 aa)) folds into the PDZ domain. PH domains are found at residues 163-300 (ILSV…TNIM) and 325-437 (EVKH…QGCH). The segment at 220 to 240 (PQSPSFSGSEDSGSPKHQNST) is disordered. Residues 222–231 (SPSFSGSEDS) show a composition bias toward low complexity. The region spanning 484-540 (PFERLKMSADDGIRNLYLDFGGPEGELTMDLHSCPKPIVFVLHTFLSAKVTRMGLLV) is the SU domain. The interval 518 to 540 (PKPIVFVLHTFLSAKVTRMGLLV) is calmodulin-binding.

It belongs to the syntrophin family. As to quaternary structure, monomer and homodimer. Interacts with the other members of the syntrophin family: SNTA1 and SNTB1; and with the sodium channel proteins SCN4A and SCN5A. Interacts with SAST, MAST205, microtubules and microtubule-associated proteins. Interacts with the dystrophin protein DMD and related proteins DTNA and UTRN, and with the neuroregulin receptor ERBB4. Interacts with PTPRN when phosphorylated, protecting PTPRN from protein cleavage by CAPN1. Dephosphorylation upon insulin stimulation disrupts the interaction with PTPRN and results in the cleavage of PTPRN. Interacts with DTNB. Phosphorylated. Partially dephosphorylated upon insulin stimulation. In terms of tissue distribution, ubiquitous. Isoform 1 is the predominant isoform. Weak level of isoform 2 is present in all tested tissues, except in liver and heart where it is highly expressed.

It is found in the membrane. The protein resides in the cytoplasmic vesicle. It localises to the secretory vesicle membrane. The protein localises to the cell junction. Its subcellular location is the cytoplasm. It is found in the cytoskeleton. Its function is as follows. Adapter protein that binds to and probably organizes the subcellular localization of a variety of membrane proteins. May link various receptors to the actin cytoskeleton and the dystrophin glycoprotein complex. May play a role in the regulation of secretory granules via its interaction with PTPRN. The sequence is that of Beta-2-syntrophin (SNTB2) from Homo sapiens (Human).